A 159-amino-acid chain; its full sequence is SsrA-binding protein (159 aa).

A disordered region spans residues 131-159 (KGKKLHDKRESEKERDWNRQKSRLLKDNG). A compositionally biased stretch (basic and acidic residues) spans 137–159 (DKRESEKERDWNRQKSRLLKDNG).

Belongs to the SmpB family.

The protein localises to the cytoplasm. Its function is as follows. Required for rescue of stalled ribosomes mediated by trans-translation. Binds to transfer-messenger RNA (tmRNA), required for stable association of tmRNA with ribosomes. tmRNA and SmpB together mimic tRNA shape, replacing the anticodon stem-loop with SmpB. tmRNA is encoded by the ssrA gene; the 2 termini fold to resemble tRNA(Ala) and it encodes a 'tag peptide', a short internal open reading frame. During trans-translation Ala-aminoacylated tmRNA acts like a tRNA, entering the A-site of stalled ribosomes, displacing the stalled mRNA. The ribosome then switches to translate the ORF on the tmRNA; the nascent peptide is terminated with the 'tag peptide' encoded by the tmRNA and targeted for degradation. The ribosome is freed to recommence translation, which seems to be the essential function of trans-translation. In Rhizobium etli (strain CIAT 652), this protein is SsrA-binding protein.